Here is a 269-residue protein sequence, read N- to C-terminus: 4-hydroxy-tetrahydrodipicolinate reductase (269 aa).

Residues 8–13, glutamate 34, 98–100, and 122–125 contribute to the NAD(+) site; these read GASGRM, GTT, and APNM. Histidine 155 acts as the Proton donor/acceptor in catalysis. A (S)-2,3,4,5-tetrahydrodipicolinate-binding site is contributed by histidine 156. The active-site Proton donor is lysine 159. Residue 165–166 coordinates (S)-2,3,4,5-tetrahydrodipicolinate; that stretch reads GT.

It belongs to the DapB family.

The protein localises to the cytoplasm. The enzyme catalyses (S)-2,3,4,5-tetrahydrodipicolinate + NAD(+) + H2O = (2S,4S)-4-hydroxy-2,3,4,5-tetrahydrodipicolinate + NADH + H(+). It catalyses the reaction (S)-2,3,4,5-tetrahydrodipicolinate + NADP(+) + H2O = (2S,4S)-4-hydroxy-2,3,4,5-tetrahydrodipicolinate + NADPH + H(+). Its pathway is amino-acid biosynthesis; L-lysine biosynthesis via DAP pathway; (S)-tetrahydrodipicolinate from L-aspartate: step 4/4. Functionally, catalyzes the conversion of 4-hydroxy-tetrahydrodipicolinate (HTPA) to tetrahydrodipicolinate. The sequence is that of 4-hydroxy-tetrahydrodipicolinate reductase from Desulfotalea psychrophila (strain LSv54 / DSM 12343).